Reading from the N-terminus, the 161-residue chain is Putative pre-16S rRNA nuclease (161 aa).

It belongs to the YqgF nuclease family.

It is found in the cytoplasm. In terms of biological role, could be a nuclease involved in processing of the 5'-end of pre-16S rRNA. The polypeptide is Putative pre-16S rRNA nuclease (Bradyrhizobium sp. (strain BTAi1 / ATCC BAA-1182)).